A 22-amino-acid polypeptide reads, in one-letter code: Sex pheromone inhibitor determinant (22 aa).

The propeptide occupies 1–14 (MSKRAMKKIIPLIT).

It is found in the secreted. Functionally, acts as a competitive inhibitor of the CAD1 pheromone. The chain is Sex pheromone inhibitor determinant (iad) from Enterococcus faecalis (strain ATCC 700802 / V583).